Here is a 343-residue protein sequence, read N- to C-terminus: MSDQIQLIAPDDWHVHLRDGEMLKQVVPYTAQMFRRAIVMPNLRPPVVTVEAAKAYRDQIVAACHPNWGFTPLMTAYLTDDIAPEEIERGFHEGVFTAAKLYPANATTNSAAGVTELRHIHGVLLVMERIGMPLLIHGEVTDVDVDVFDREAVFIERSLKPIRDRYPGLKVVLEHITTEQAVDFVGSADQNLAATITPHHLHINRNAMFAGGLRSDFYCLPVAKRERHRLALRRAAMSGDRRFFLGTDSAPHARPGKESSCGCAGIFNAPHALESYAMAFAQDDKLDKLEAFASLHGPAFYGLPVNEGIVTLQRDDKLVPNVVNGLVPFHAGETLPWRLQPCT.

Zn(2+) is bound by residues His-14 and His-16. Residues 16–18 (HLR) and Asn-42 each bind substrate. Zn(2+) is bound by residues Lys-100, His-137, and His-175. Lys-100 carries the post-translational modification N6-carboxylysine. His-137 is a substrate binding site. Leu-220 is a binding site for substrate. Asp-248 lines the Zn(2+) pocket. Residue Asp-248 is part of the active site. The substrate site is built by His-252 and Ala-264.

Belongs to the metallo-dependent hydrolases superfamily. DHOase family. Class II DHOase subfamily. As to quaternary structure, homodimer. It depends on Zn(2+) as a cofactor.

It carries out the reaction (S)-dihydroorotate + H2O = N-carbamoyl-L-aspartate + H(+). It functions in the pathway pyrimidine metabolism; UMP biosynthesis via de novo pathway; (S)-dihydroorotate from bicarbonate: step 3/3. In terms of biological role, catalyzes the reversible cyclization of carbamoyl aspartate to dihydroorotate. The chain is Dihydroorotase from Synechococcus sp. (strain CC9902).